The primary structure comprises 147 residues: uncharacterized protein (147 aa).

The N-acetyltransferase domain maps to 7–147 (LEINYKTDEL…GHDVLVWAPK (141 aa)).

This is an uncharacterized protein from Staphylococcus haemolyticus (strain JCSC1435).